Here is a 654-residue protein sequence, read N- to C-terminus: Macrolide export ATP-binding/permease protein MacB (654 aa).

The 239-residue stretch at L6–S244 folds into the ABC transporter domain. Position 42–49 (G42–S49) interacts with ATP. The next 4 helical transmembrane spans lie at F280–G300, L529–I549, L584–F604, and S619–A639.

Belongs to the ABC transporter superfamily. Macrolide exporter (TC 3.A.1.122) family. Homodimer. Part of the tripartite efflux system MacAB-TolC, which is composed of an inner membrane transporter, MacB, a periplasmic membrane fusion protein, MacA, and an outer membrane component, TolC. The complex forms a large protein conduit and can translocate molecules across both the inner and outer membranes. Interacts with MacA.

It is found in the cell inner membrane. In terms of biological role, part of the tripartite efflux system MacAB-TolC. MacB is a non-canonical ABC transporter that contains transmembrane domains (TMD), which form a pore in the inner membrane, and an ATP-binding domain (NBD), which is responsible for energy generation. Confers resistance against macrolides. The chain is Macrolide export ATP-binding/permease protein MacB from Vibrio parahaemolyticus serotype O3:K6 (strain RIMD 2210633).